The following is an 83-amino-acid chain: Small ribosomal subunit protein bS16 (83 aa).

The protein belongs to the bacterial ribosomal protein bS16 family.

The protein is Small ribosomal subunit protein bS16 of Verminephrobacter eiseniae (strain EF01-2).